The chain runs to 254 residues: tRNA threonylcarbamoyladenosine dehydratase (254 aa).

Belongs to the HesA/MoeB/ThiF family.

Catalyzes the ATP-dependent dehydration of threonylcarbamoyladenosine at position 37 (t(6)A37) to form cyclic t(6)A37 (ct(6)A37) in tRNAs that read codons beginning with adenine. This Bacillus subtilis (strain 168) protein is tRNA threonylcarbamoyladenosine dehydratase (tcdA).